The primary structure comprises 474 residues: ABHD16B (474 aa).

Residues 175–295 (VICCEGNAGF…QSWKGLVVRT (121 aa)) enclose the AB hydrolase-1 domain. Catalysis depends on charge relay system residues Ser-248, Asp-323, and His-423.

This sequence belongs to the AB hydrolase superfamily. ABHD16 family. Expressed in most tissues, with highest expression found in the testes, skeletal muscle, and brown adipose tissue.

The catalysed reaction is a 1,2-diacyl-sn-glycero-3-phospho-L-serine + H2O = a 2-acyl-sn-glycero-3-phospho-L-serine + a fatty acid + H(+). The enzyme catalyses a 1-acylglycerol + H2O = glycerol + a fatty acid + H(+). It catalyses the reaction 1-(9Z-octadecenoyl)-glycerol + H2O = glycerol + (9Z)-octadecenoate + H(+). Hydrolyzes the sn-1 position of glycerophospholipids with high specificity towards phosphatidylserine (PS), PS-PLA1 enzyme. Also hydrolyzes the acyl chain of glycerolipids with a preference for the monoacylglycerol (MAG) 1-acylglycerol, MAG lipase. Plays a regulatory role in cellular lipid homeostasis by modulating genes involved in neutral lipid degradation and in phospholipid synthesis and composition. The chain is ABHD16B from Mus musculus (Mouse).